A 350-amino-acid polypeptide reads, in one-letter code: [LysW]-L-2-aminoadipate/[LysW]-L-glutamate phosphate reductase (350 aa).

10-13 (SGYT) serves as a coordination point for NADP(+). C150 is an active-site residue. N317 lines the NADP(+) pocket.

Belongs to the NAGSA dehydrogenase family. Type 1 subfamily. LysY sub-subfamily.

The protein localises to the cytoplasm. The enzyme catalyses [amino-group carrier protein]-C-terminal-N-(1-carboxy-5-oxopentan-1-yl)-L-glutamine + phosphate + NADP(+) = [amino-group carrier protein]-C-terminal-N-(1-carboxy-5-phosphooxy-5-oxopentan-1-yl)-L-glutamine + NADPH + H(+). The catalysed reaction is [amino-group carrier protein]-C-terminal-gamma-(L-glutamyl-5-semialdehyde)-L-glutamate + phosphate + NADP(+) = [amino-group carrier protein]-C-terminal-gamma-(5-phospho-L-glutamyl)-L-glutamate + NADPH + H(+). The protein operates within amino-acid biosynthesis; L-lysine biosynthesis via AAA pathway; L-lysine from L-alpha-aminoadipate (Thermus route): step 3/5. Its pathway is amino-acid biosynthesis; L-arginine biosynthesis. Involved in both the arginine and lysine biosynthetic pathways. The polypeptide is [LysW]-L-2-aminoadipate/[LysW]-L-glutamate phosphate reductase (Sulfolobus acidocaldarius (strain ATCC 33909 / DSM 639 / JCM 8929 / NBRC 15157 / NCIMB 11770)).